The sequence spans 571 residues: Proline--tRNA ligase (571 aa).

Belongs to the class-II aminoacyl-tRNA synthetase family. ProS type 1 subfamily. Homodimer.

The protein resides in the cytoplasm. The enzyme catalyses tRNA(Pro) + L-proline + ATP = L-prolyl-tRNA(Pro) + AMP + diphosphate. Catalyzes the attachment of proline to tRNA(Pro) in a two-step reaction: proline is first activated by ATP to form Pro-AMP and then transferred to the acceptor end of tRNA(Pro). As ProRS can inadvertently accommodate and process non-cognate amino acids such as alanine and cysteine, to avoid such errors it has two additional distinct editing activities against alanine. One activity is designated as 'pretransfer' editing and involves the tRNA(Pro)-independent hydrolysis of activated Ala-AMP. The other activity is designated 'posttransfer' editing and involves deacylation of mischarged Ala-tRNA(Pro). The misacylated Cys-tRNA(Pro) is not edited by ProRS. This Pseudomonas syringae pv. syringae (strain B728a) protein is Proline--tRNA ligase.